The chain runs to 463 residues: L-seryl-tRNA(Sec) selenium transferase (463 aa).

Lys-294 is subject to N6-(pyridoxal phosphate)lysine.

This sequence belongs to the SelA family. Pyridoxal 5'-phosphate serves as cofactor.

The protein localises to the cytoplasm. It catalyses the reaction L-seryl-tRNA(Sec) + selenophosphate + H(+) = L-selenocysteinyl-tRNA(Sec) + phosphate. It functions in the pathway aminoacyl-tRNA biosynthesis; selenocysteinyl-tRNA(Sec) biosynthesis; selenocysteinyl-tRNA(Sec) from L-seryl-tRNA(Sec) (bacterial route): step 1/1. Functionally, converts seryl-tRNA(Sec) to selenocysteinyl-tRNA(Sec) required for selenoprotein biosynthesis. The protein is L-seryl-tRNA(Sec) selenium transferase of Hyphomonas neptunium (strain ATCC 15444).